Consider the following 361-residue polypeptide: P2Y purinoceptor 4 (361 aa).

The disordered stretch occupies residues 1 to 20; sequence MTSAESLLFTSLGPSPSSGD. Over 1 to 30 the chain is Extracellular; it reads MTSAESLLFTSLGPSPSSGDGDCRFNEEFK. The helical transmembrane segment at 31–58 threads the bilayer; it reads FILLPMSYAVVFVLGLALNAPTLWLFLF. The Cytoplasmic portion of the chain corresponds to 59-68; that stretch reads RLRPWDATAT. A helical transmembrane segment spans residues 69–91; it reads YMFHLALSDTLYVLSLPTLVYYY. Over 92-108 the chain is Extracellular; sequence AARNHWPFGTGLCKFVR. Residues cysteine 104 and cysteine 181 are joined by a disulfide bond. The chain crosses the membrane as a helical span at residues 109–127; the sequence is FLFYWNLYCSVLFLTCISV. Residues 128–149 are Cytoplasmic-facing; it reads HRYLGICHPLRAIRWGRPRFAS. A helical membrane pass occupies residues 150–170; the sequence is LLCLGVWLVVAGCLVPNLFFV. The Extracellular portion of the chain corresponds to 171–192; that stretch reads TTNANGTTILCHDTTLPEEFDH. N-linked (GlcNAc...) asparagine glycosylation occurs at asparagine 175. The helical transmembrane segment at 193-218 threads the bilayer; sequence YVYFSSAVMVLLFGLPFLITLVCYGL. Residues 219–242 are Cytoplasmic-facing; that stretch reads MARRLYRPLPGAGQSSSRLRSLRT. Residues 243-265 traverse the membrane as a helical segment; sequence IAVVLTVFAVCFVPFHITRTIYY. The Extracellular portion of the chain corresponds to 266-283; that stretch reads QARLLQADCHVLNIVNVV. The chain crosses the membrane as a helical span at residues 284–305; it reads YKVTRPLASANSCLDPVLYLFT. Over 306 to 361 the chain is Cytoplasmic; that stretch reads GDKYRNQLQQLCRGSKPKPRTAASSLALVTLHEESISRWADTHQDSTFSAYEGDRL.

This sequence belongs to the G-protein coupled receptor 1 family. Phosphorylation of Ser-329 and Ser-330 is a key step in agonist-dependent desensitization and loss of surface P2RY4. This phosphorylation does not involve PKC, nor other calcium-activated kinases. As to expression, widely expressed at low levels. In brain, higher expression in the pineal gland and ventricular system.

It localises to the cell membrane. Its function is as follows. Receptor for ATP and UTP coupled to G-proteins that activate a phosphatidylinositol-calcium second messenger system. Not activated by ADP or UDP. This chain is P2Y purinoceptor 4 (P2ry4), found in Rattus norvegicus (Rat).